Consider the following 644-residue polypeptide: Exoribonuclease 2 (644 aa).

Positions 189-516 (RQDLTALNFV…NHRLLKAVIK (328 aa)) constitute an RNB domain. The region spanning 561 to 643 (NTRFAAEIID…ETRSIIARPA (83 aa)) is the S1 motif domain.

It belongs to the RNR ribonuclease family. RNase II subfamily.

The protein localises to the cytoplasm. The enzyme catalyses Exonucleolytic cleavage in the 3'- to 5'-direction to yield nucleoside 5'-phosphates.. In terms of biological role, involved in mRNA degradation. Hydrolyzes single-stranded polyribonucleotides processively in the 3' to 5' direction. The polypeptide is Exoribonuclease 2 (Salmonella gallinarum (strain 287/91 / NCTC 13346)).